The following is a 612-amino-acid chain: Glutamine--fructose-6-phosphate aminotransferase [isomerizing] (612 aa).

Residue cysteine 2 is the Nucleophile; for GATase activity of the active site. Residues 2-220 (CGIVGAIRAH…DGDIALLASD (219 aa)) form the Glutamine amidotransferase type-2 domain. 2 SIS domains span residues 288–428 (AKSV…VRGL) and 461–602 (WAQQ…VDKP). The active-site For Fru-6P isomerization activity is lysine 607.

Homodimer.

The protein resides in the cytoplasm. The enzyme catalyses D-fructose 6-phosphate + L-glutamine = D-glucosamine 6-phosphate + L-glutamate. Catalyzes the first step in hexosamine metabolism, converting fructose-6P into glucosamine-6P using glutamine as a nitrogen source. This chain is Glutamine--fructose-6-phosphate aminotransferase [isomerizing], found in Neisseria meningitidis serogroup B (strain ATCC BAA-335 / MC58).